Reading from the N-terminus, the 557-residue chain is Transmembrane protein 209 (557 aa).

Residues 28–48 (VVLAWGLLNVSLAGMIYTEMT) traverse the membrane as a helical segment. A glycan (N-linked (GlcNAc...) asparagine) is linked at N57. The helical transmembrane segment at 60 to 80 (YWPLWYIELALASLFSLNALF) threads the bilayer. 2 disordered regions span residues 108–156 (PYSS…KFSP) and 194–232 (YSSSPGSSQYPSNLGPVEGGLRSRYRSSPSTYSSPTDKE). Polar residues predominate over residues 125–140 (VPASTPSPSMQGQNVL). 3 stretches are compositionally biased toward low complexity: residues 141-156 (SYSPSRSPSSSPKFSP), 194-205 (YSSSPGSSQYPS), and 219-228 (RSSPSTYSSP). N-linked (GlcNAc...) asparagine glycans are attached at residues N273 and N343.

It localises to the membrane. It is found in the nucleus envelope. The protein resides in the golgi apparatus. The protein localises to the cytoplasm. This Xenopus tropicalis (Western clawed frog) protein is Transmembrane protein 209 (tmem209).